The primary structure comprises 508 residues: Photosystem II CP47 reaction center protein (508 aa).

The next 6 helical transmembrane spans lie at 21–36 (SVHIMHTALVAGWAGS), 101–115 (IVFSGLCFLAAIWHW), 140–156 (GIHLFLSGVACFGFGAF), 203–218 (IAAGTLGILAGLFHLS), 237–252 (VLSSSIAAVFFAAFVV), and 457–472 (SFALLFFFGHIWHGAR).

Belongs to the PsbB/PsbC family. PsbB subfamily. As to quaternary structure, PSII is composed of 1 copy each of membrane proteins PsbA, PsbB, PsbC, PsbD, PsbE, PsbF, PsbH, PsbI, PsbJ, PsbK, PsbL, PsbM, PsbT, PsbX, PsbY, PsbZ, Psb30/Ycf12, at least 3 peripheral proteins of the oxygen-evolving complex and a large number of cofactors. It forms dimeric complexes. Binds multiple chlorophylls. PSII binds additional chlorophylls, carotenoids and specific lipids. serves as cofactor.

The protein resides in the plastid. It localises to the chloroplast thylakoid membrane. Its function is as follows. One of the components of the core complex of photosystem II (PSII). It binds chlorophyll and helps catalyze the primary light-induced photochemical processes of PSII. PSII is a light-driven water:plastoquinone oxidoreductase, using light energy to abstract electrons from H(2)O, generating O(2) and a proton gradient subsequently used for ATP formation. The sequence is that of Photosystem II CP47 reaction center protein from Gossypium barbadense (Sea Island cotton).